We begin with the raw amino-acid sequence, 111 residues long: uncharacterized protein (111 aa).

The protein belongs to the asfivirus E111R family.

This is an uncharacterized protein from African swine fever virus (strain Badajoz 1971 Vero-adapted) (Ba71V).